The following is a 263-amino-acid chain: Acyl-[acyl-carrier-protein]--UDP-N-acetylglucosamine O-acyltransferase (263 aa).

It belongs to the transferase hexapeptide repeat family. LpxA subfamily. As to quaternary structure, homotrimer.

It is found in the cytoplasm. The catalysed reaction is a (3R)-hydroxyacyl-[ACP] + UDP-N-acetyl-alpha-D-glucosamine = a UDP-3-O-[(3R)-3-hydroxyacyl]-N-acetyl-alpha-D-glucosamine + holo-[ACP]. The protein operates within glycolipid biosynthesis; lipid IV(A) biosynthesis; lipid IV(A) from (3R)-3-hydroxytetradecanoyl-[acyl-carrier-protein] and UDP-N-acetyl-alpha-D-glucosamine: step 1/6. Its function is as follows. Involved in the biosynthesis of lipid A, a phosphorylated glycolipid that anchors the lipopolysaccharide to the outer membrane of the cell. This chain is Acyl-[acyl-carrier-protein]--UDP-N-acetylglucosamine O-acyltransferase, found in Campylobacter jejuni (strain RM1221).